The chain runs to 1777 residues: FERM and PDZ domain-containing protein 3 (1777 aa).

Residues 21–98 (QVTVHRDPIY…FIVLTVLHTH (78 aa)) form the PDZ domain. The 315-residue stretch at 147–461 (NVLKVFLENG…GYCRLLLDSR (315 aa)) folds into the FERM domain. 7 disordered regions span residues 491 to 520 (TGGH…TPPP), 555 to 574 (ETRP…QGYE), 622 to 697 (QLGP…GRHL), 832 to 871 (SLGR…QGER), 1014 to 1216 (SAPE…PFRL), 1309 to 1346 (RPQA…LSSP), and 1732 to 1765 (QQQQ…ATVM). Residues 502–511 (YVGSVGTSPR) are compositionally biased toward polar residues. Basic and acidic residues predominate over residues 555–564 (ETRPRTKSDP). Positions 649–659 (SEEEEEEEDET) are enriched in acidic residues. 4 stretches are compositionally biased toward polar residues: residues 840-850 (PSLQPIATGQS), 1015-1035 (APET…SSPR), 1046-1056 (HLSQQEDSLPV), and 1094-1111 (LQKQ…QLES). Residues 1134–1168 (QSPSCQSRSHSPSCQPHGHSPSSQSRGQSPSCQPR) show a composition bias toward low complexity. A compositionally biased stretch (polar residues) spans 1172-1202 (PLRSQAASRQVSTMPSRKLETTLNGAHSTSE). Over residues 1732–1751 (QQQQQQQQQQQQVAAAAGAA) the composition is skewed to low complexity.

The polypeptide is FERM and PDZ domain-containing protein 3 (Homo sapiens (Human)).